A 107-amino-acid polypeptide reads, in one-letter code: Iron-binding protein IscA (107 aa).

Positions 35, 99, and 101 each coordinate Fe cation.

It belongs to the HesB/IscA family. As to quaternary structure, homodimer; may form tetramers and higher multimers. Fe cation serves as cofactor.

Functionally, is able to transfer iron-sulfur clusters to apo-ferredoxin. Multiple cycles of [2Fe2S] cluster formation and transfer are observed, suggesting that IscA acts catalytically. Recruits intracellular free iron so as to provide iron for the assembly of transient iron-sulfur cluster in IscU in the presence of IscS, L-cysteine and the thioredoxin reductase system TrxA/TrxB. This chain is Iron-binding protein IscA, found in Photorhabdus laumondii subsp. laumondii (strain DSM 15139 / CIP 105565 / TT01) (Photorhabdus luminescens subsp. laumondii).